The following is a 394-amino-acid chain: Phosphopentomutase (394 aa).

Mn(2+)-binding residues include Asp13, Asp286, His291, Asp327, His328, and His339.

The protein belongs to the phosphopentomutase family. It depends on Mn(2+) as a cofactor.

The protein localises to the cytoplasm. It catalyses the reaction 2-deoxy-alpha-D-ribose 1-phosphate = 2-deoxy-D-ribose 5-phosphate. The enzyme catalyses alpha-D-ribose 1-phosphate = D-ribose 5-phosphate. It functions in the pathway carbohydrate degradation; 2-deoxy-D-ribose 1-phosphate degradation; D-glyceraldehyde 3-phosphate and acetaldehyde from 2-deoxy-alpha-D-ribose 1-phosphate: step 1/2. Its function is as follows. Isomerase that catalyzes the conversion of deoxy-ribose 1-phosphate (dRib-1-P) and ribose 1-phosphate (Rib-1-P) to deoxy-ribose 5-phosphate (dRib-5-P) and ribose 5-phosphate (Rib-5-P), respectively. This Bacillus mycoides (strain KBAB4) (Bacillus weihenstephanensis) protein is Phosphopentomutase.